The sequence spans 199 residues: Recombination protein RecR (199 aa).

Residues 58–73 (CSVCGNLTDTDVCPLC) form a C4-type zinc finger. The Toprim domain occupies 81 to 176 (SVICVVEDPR…KTTRIAHGIP (96 aa)).

The protein belongs to the RecR family.

May play a role in DNA repair. It seems to be involved in an RecBC-independent recombinational process of DNA repair. It may act with RecF and RecO. The polypeptide is Recombination protein RecR (Acetivibrio thermocellus (strain ATCC 27405 / DSM 1237 / JCM 9322 / NBRC 103400 / NCIMB 10682 / NRRL B-4536 / VPI 7372) (Clostridium thermocellum)).